The following is a 195-amino-acid chain: Phosphoheptose isomerase (195 aa).

The region spanning 35–195 (LCVALYRGDK…EKEIFGDGVN (161 aa)) is the SIS domain. 51-53 (NGG) lines the substrate pocket. Zn(2+) contacts are provided by His-60 and Glu-64. Substrate is bound by residues Glu-64, 93 to 94 (ND), 119 to 121 (STS), Ser-124, and Gln-171. Zn(2+) is bound by residues Gln-171 and His-179.

It belongs to the SIS family. GmhA subfamily. In terms of assembly, homotetramer. Requires Zn(2+) as cofactor.

The protein resides in the cytoplasm. It carries out the reaction 2 D-sedoheptulose 7-phosphate = D-glycero-alpha-D-manno-heptose 7-phosphate + D-glycero-beta-D-manno-heptose 7-phosphate. It functions in the pathway carbohydrate biosynthesis; D-glycero-D-manno-heptose 7-phosphate biosynthesis; D-glycero-alpha-D-manno-heptose 7-phosphate and D-glycero-beta-D-manno-heptose 7-phosphate from sedoheptulose 7-phosphate: step 1/1. Its function is as follows. Catalyzes the isomerization of sedoheptulose 7-phosphate in D-glycero-D-manno-heptose 7-phosphate. The sequence is that of Phosphoheptose isomerase from Sulfurimonas denitrificans (strain ATCC 33889 / DSM 1251) (Thiomicrospira denitrificans (strain ATCC 33889 / DSM 1251)).